The primary structure comprises 264 residues: Thymidylate synthase (264 aa).

Arg21 contacts dUMP. His51 is a (6R)-5,10-methylene-5,6,7,8-tetrahydrofolate binding site. 126–127 (RR) is a binding site for dUMP. Cys146 acts as the Nucleophile in catalysis. Residues 166–169 (RSGD), Asn177, and 207–209 (HLY) each bind dUMP. Residue Asp169 participates in (6R)-5,10-methylene-5,6,7,8-tetrahydrofolate binding. Ala263 serves as a coordination point for (6R)-5,10-methylene-5,6,7,8-tetrahydrofolate.

Belongs to the thymidylate synthase family. Bacterial-type ThyA subfamily. Homodimer.

It localises to the cytoplasm. It carries out the reaction dUMP + (6R)-5,10-methylene-5,6,7,8-tetrahydrofolate = 7,8-dihydrofolate + dTMP. It functions in the pathway pyrimidine metabolism; dTTP biosynthesis. Catalyzes the reductive methylation of 2'-deoxyuridine-5'-monophosphate (dUMP) to 2'-deoxythymidine-5'-monophosphate (dTMP) while utilizing 5,10-methylenetetrahydrofolate (mTHF) as the methyl donor and reductant in the reaction, yielding dihydrofolate (DHF) as a by-product. This enzymatic reaction provides an intracellular de novo source of dTMP, an essential precursor for DNA biosynthesis. The sequence is that of Thymidylate synthase from Xanthomonas axonopodis pv. citri (strain 306).